The primary structure comprises 162 residues: MTAIQNFFKTFFLTELLKGLALTGRYTFQRKVTVQFPEEKTPISPRFRGLHALRRYENGEERCIACKLCEAVCPALAITIESETRADNTRRTTRYDIDLTKCIFCGFCEESCPVDSIVETHILEYHGEKRGDLYFTKDMLLAVGDRYETEIAANKAADAPYR.

2 4Fe-4S ferredoxin-type domains span residues 54–83 (RRYENGEERCIACKLCEAVCPALAITIESE) and 93–122 (TRYDIDLTKCIFCGFCEESCPVDSIVETHI). [4Fe-4S] cluster-binding residues include Cys63, Cys66, Cys69, Cys73, Cys102, Cys105, Cys108, and Cys112.

The protein belongs to the complex I 23 kDa subunit family. NDH-1 is composed of 14 different subunits. Subunits NuoA, H, J, K, L, M, N constitute the membrane sector of the complex. Requires [4Fe-4S] cluster as cofactor.

The protein localises to the cell inner membrane. The enzyme catalyses a quinone + NADH + 5 H(+)(in) = a quinol + NAD(+) + 4 H(+)(out). Its function is as follows. NDH-1 shuttles electrons from NADH, via FMN and iron-sulfur (Fe-S) centers, to quinones in the respiratory chain. The immediate electron acceptor for the enzyme in this species is believed to be ubiquinone. Couples the redox reaction to proton translocation (for every two electrons transferred, four hydrogen ions are translocated across the cytoplasmic membrane), and thus conserves the redox energy in a proton gradient. The chain is NADH-quinone oxidoreductase subunit I from Paraburkholderia xenovorans (strain LB400).